Consider the following 85-residue polypeptide: Anti-neuroexcitation peptide 2 (85 aa).

Positions 1–21 (MKLSLLLVISASMLIDGLVNA) are cleaved as a signal peptide. Residues 22 to 82 (DGYIRGSNGC…TWKSESNTCG (61 aa)) form the LCN-type CS-alpha/beta domain. 4 disulfide bridges follow: Cys31–Cys81, Cys35–Cys56, Cys42–Cys63, and Cys46–Cys65.

The protein belongs to the long (4 C-C) scorpion toxin superfamily. Sodium channel inhibitor family. Beta subfamily. Expressed by the venom gland.

It is found in the secreted. Its function is as follows. Binds to sodium channels (Nav) and inhibits them. Recombinant ANEP delays the convulsion seizure of insect models by 18% and shows anti-neuroexcitatory activity. The protein is Anti-neuroexcitation peptide 2 of Olivierus martensii (Manchurian scorpion).